Consider the following 203-residue polypeptide: bMERB domain-containing protein 1 (203 aa).

One can recognise a bMERB domain in the interval 3–149 (LKQSLSVHLE…EQEEDKEMAD (147 aa)). A disordered region spans residues 160-186 (KVTKSSASSRAEKKAEPPPSKPTVAKT).

The protein is bMERB domain-containing protein 1 (Bmerb1) of Rattus norvegicus (Rat).